The following is a 437-amino-acid chain: tRNA(Ile)-lysidine synthase (437 aa).

22-27 (SGGLDS) serves as a coordination point for ATP.

This sequence belongs to the tRNA(Ile)-lysidine synthase family.

It localises to the cytoplasm. The catalysed reaction is cytidine(34) in tRNA(Ile2) + L-lysine + ATP = lysidine(34) in tRNA(Ile2) + AMP + diphosphate + H(+). Its function is as follows. Ligates lysine onto the cytidine present at position 34 of the AUA codon-specific tRNA(Ile) that contains the anticodon CAU, in an ATP-dependent manner. Cytidine is converted to lysidine, thus changing the amino acid specificity of the tRNA from methionine to isoleucine. The polypeptide is tRNA(Ile)-lysidine synthase (Xylella fastidiosa (strain 9a5c)).